Here is a 378-residue protein sequence, read N- to C-terminus: Beta-1,3-N-acetylglucosaminyltransferase lunatic fringe (378 aa).

Residues 1–8 (MLQRCGRR) are Cytoplasmic-facing. A helical; Signal-anchor for type II membrane protein membrane pass occupies residues 9 to 29 (LLLALVGALLACLLVLTADPP). Topologically, residues 30-378 (PTPMPAERGR…TPWCPRSAIF (349 aa)) are lumenal. The disordered stretch occupies residues 85-108 (RDADPPPGVASRQGDGHPRPPAEV). Residue Arg128 participates in substrate binding. Asn166 carries an N-linked (GlcNAc...) asparagine glycan. 2 disulfide bridges follow: Cys167-Cys178 and Cys196-Cys259. Asp200 is a substrate binding site. Residue Asp201 coordinates Mn(2+). Asp289 is a catalytic residue. His313 serves as a coordination point for Mn(2+). An intrachain disulfide couples Cys363 to Cys372.

Belongs to the glycosyltransferase 31 family. It depends on Mn(2+) as a cofactor. Co(2+) serves as cofactor. Post-translationally, a soluble form may be derived from the membrane form by proteolytic processing. In terms of tissue distribution, detected at 12.5 dpc in all tissues examined with the highest level observed in adult brain and spleen. Detected in the dental epithelium.

It localises to the golgi apparatus. It is found in the golgi apparatus membrane. The catalysed reaction is 3-O-(alpha-L-fucosyl)-L-threonyl-[EGF-like domain protein] + UDP-N-acetyl-alpha-D-glucosamine = 3-O-(N-acetyl-beta-D-glucosaminyl-(1-&gt;3)-alpha-L-fucosyl)-L-threonyl-[EGF-like domain protein] + UDP + H(+). It carries out the reaction 3-O-(alpha-L-fucosyl)-L-seryl-[EGF-like domain protein] + UDP-N-acetyl-alpha-D-glucosamine = 3-O-(N-acetyl-beta-D-glucosaminyl-(1-&gt;3)-alpha-L-fucosyl)-L-seryl-[EGF-like domain protein] + UDP + H(+). Functionally, glycosyltransferase that initiates the elongation of O-linked fucose residues attached to EGF-like repeats in the extracellular domain of Notch molecules. Modulates NOTCH1 activity by modifying O-fucose residues at specific EGF-like domains resulting in inhibition of NOTCH1 activation by JAG1 and enhancement of NOTCH1 activation by DLL1 via an increase in its binding to DLL1. Decreases the binding of JAG1 to NOTCH2 but not that of DLL1. Essential mediator of somite segmentation and patterning. During somite boundary formation, it restricts Notch activity in the presomitic mesoderm to a boundary-forming territory in the posterior half of the prospective somite. In this region, Notch function activates a set of genes that are involved in boundary formation and in anterior-posterior somite identity. Ectopically expressed in the thymus, Lfgn inhibits Notch signaling which results in inhibition of T-cell commitment and promotes B-cell development in lymphoid progenitors. May play a role in boundary formation of the enamel knot. This is Beta-1,3-N-acetylglucosaminyltransferase lunatic fringe from Mus musculus (Mouse).